Reading from the N-terminus, the 568-residue chain is PTS system lactose-specific EIICB component (568 aa).

In terms of domain architecture, PTS EIIC type-3 spans 8 to 409 (IEKGKPFFEK…LVDTVIYYPF (402 aa)). 10 helical membrane-spanning segments follow: residues 30–50 (GFIS…IAYV), 65–85 (MLMT…AGTT), 103–123 (INFI…AADP), 128–148 (GFLS…AAFI), 183–203 (FAFS…VIGV), 222–242 (GYLG…VGIH), 246–266 (IVEP…AHLI), 283–303 (FIVT…FMWL), 339–359 (VFFI…KFFV), and 381–401 (IVLG…LILV). The region spanning 465 to 568 (ETNVLVLCAG…LAFVEEQFKD (104 aa)) is the PTS EIIB type-3 domain. Residue Cys472 is the Phosphocysteine intermediate; for EIIB activity of the active site. The residue at position 472 (Cys472) is a Phosphocysteine; by EIIA.

Its subcellular location is the cell membrane. The enzyme catalyses lactose(out) + N(pros)-phospho-L-histidyl-[protein] = lactose 6-phosphate(in) + L-histidyl-[protein]. Its function is as follows. The phosphoenolpyruvate-dependent sugar phosphotransferase system (sugar PTS), a major carbohydrate active transport system, catalyzes the phosphorylation of incoming sugar substrates concomitantly with their translocation across the cell membrane. The enzyme II LacEF PTS system is involved in lactose transport. The polypeptide is PTS system lactose-specific EIICB component (Streptococcus mutans serotype c (strain ATCC 700610 / UA159)).